The following is a 141-amino-acid chain: Large ribosomal subunit protein uL11 (141 aa).

It belongs to the universal ribosomal protein uL11 family. As to quaternary structure, part of the ribosomal stalk of the 50S ribosomal subunit. Interacts with L10 and the large rRNA to form the base of the stalk. L10 forms an elongated spine to which L12 dimers bind in a sequential fashion forming a multimeric L10(L12)X complex. One or more lysine residues are methylated.

Functionally, forms part of the ribosomal stalk which helps the ribosome interact with GTP-bound translation factors. The polypeptide is Large ribosomal subunit protein uL11 (Streptococcus gordonii (strain Challis / ATCC 35105 / BCRC 15272 / CH1 / DL1 / V288)).